The sequence spans 478 residues: Kynureninase (478 aa).

Pyridoxal 5'-phosphate is bound by residues Leu138, Thr139, 166–169 (FPSD), Asp252, His255, and Tyr277. At Lys278 the chain carries N6-(pyridoxal phosphate)lysine. Positions 315 and 343 each coordinate pyridoxal 5'-phosphate.

Belongs to the kynureninase family. Homodimer. The cofactor is pyridoxal 5'-phosphate.

Its subcellular location is the cytoplasm. The enzyme catalyses L-kynurenine + H2O = anthranilate + L-alanine + H(+). It catalyses the reaction 3-hydroxy-L-kynurenine + H2O = 3-hydroxyanthranilate + L-alanine + H(+). It participates in amino-acid degradation; L-kynurenine degradation; L-alanine and anthranilate from L-kynurenine: step 1/1. The protein operates within cofactor biosynthesis; NAD(+) biosynthesis; quinolinate from L-kynurenine: step 2/3. Its function is as follows. Catalyzes the cleavage of L-kynurenine (L-Kyn) and L-3-hydroxykynurenine (L-3OHKyn) into anthranilic acid (AA) and 3-hydroxyanthranilic acid (3-OHAA), respectively. The polypeptide is Kynureninase (Coccidioides immitis (strain RS) (Valley fever fungus)).